Here is a 282-residue protein sequence, read N- to C-terminus: Shikimate dehydrogenase (NADP(+)) (282 aa).

Shikimate-binding positions include Ser15–Ser17 and Thr62. The active-site Proton acceptor is Lys66. Residues Asn87 and Asp103 each contribute to the shikimate site. NADP(+)-binding positions include Gly127–Ala131, Asn151–Lys156, and Met220. Tyr222 contacts shikimate. Position 244 (Gly244) interacts with NADP(+).

The protein belongs to the shikimate dehydrogenase family. In terms of assembly, homodimer.

The catalysed reaction is shikimate + NADP(+) = 3-dehydroshikimate + NADPH + H(+). It functions in the pathway metabolic intermediate biosynthesis; chorismate biosynthesis; chorismate from D-erythrose 4-phosphate and phosphoenolpyruvate: step 4/7. Involved in the biosynthesis of the chorismate, which leads to the biosynthesis of aromatic amino acids. Catalyzes the reversible NADPH linked reduction of 3-dehydroshikimate (DHSA) to yield shikimate (SA). This is Shikimate dehydrogenase (NADP(+)) from Shewanella baltica (strain OS155 / ATCC BAA-1091).